Reading from the N-terminus, the 226-residue chain is Lysoplasmalogenase TMEM86B (226 aa).

Residues 1–23 lie on the Cytoplasmic side of the membrane; sequence MDARKEGLPLETLFSDQYPQVRR. The chain crosses the membrane as a helical span at residues 24–40; the sequence is WLAPFILACSLYFLLWI. Over 41–46 the chain is Extracellular; that stretch reads PVDQPS. Residues 47-68 form a helical membrane-spanning segment; that stretch reads WVSALIKCQPILCLVVFLWAVA. Residues 69–74 lie on the Cytoplasmic side of the membrane; the sequence is PGGSST. Residues 75 to 93 form a helical membrane-spanning segment; that stretch reads WLLQGALVCSAVGDACLIW. Residues 94 to 99 are Extracellular-facing; sequence PEAFFY. A helical transmembrane segment spans residues 100–117; the sequence is GTAAFSVAHLFYLGAFGL. Topologically, residues 118 to 123 are cytoplasmic; sequence TPLQPG. A helical membrane pass occupies residues 124-140; sequence LLLCTTLASLTYYSFLL. Residues 141–146 lie on the Extracellular side of the membrane; sequence LHLEQG. The chain crosses the membrane as a helical span at residues 147–163; sequence MVLPVMAYGLILNSMLW. Over 164–171 the chain is Cytoplasmic; the sequence is RSLVWGGS. Residues 172-188 traverse the membrane as a helical segment; sequence ASWGAVLFTFSDGVLAW. Over 189–199 the chain is Extracellular; sequence DTFVYSLPFAR. Residues 200-218 traverse the membrane as a helical segment; sequence LVTMSTYYAAQLLLILSAL. The Cytoplasmic segment spans residues 219 to 226; the sequence is RNPGLKTH.

It belongs to the TMEM86 family. As to quaternary structure, homodimer. As to expression, enriched in liver. Also detected in brain and testis.

It localises to the endoplasmic reticulum membrane. The protein resides in the cytoplasm. The enzyme catalyses a 1-O-(1Z-alkenyl)-sn-glycero-3-phosphocholine + H2O = a 2,3-saturated aldehyde + sn-glycerol 3-phosphocholine. The catalysed reaction is a 1-O-(1Z-alkenyl)-sn-glycero-3-phosphoethanolamine + H2O = a 2,3-saturated aldehyde + sn-glycero-3-phosphoethanolamine. With respect to regulation, competitively inhibited by lysophosphatidic acid. Its function is as follows. Catalyzes the hydrolysis of the vinyl ether bond of choline or ethanolamine lysoplasmalogens, forming fatty aldehyde and glycerophosphocholine or glycerophosphoethanolamine, respectively and is specific for the sn-2-deacylated (lyso) form of plasmalogen. The sequence is that of Lysoplasmalogenase TMEM86B (Tmem86b) from Mus musculus (Mouse).